A 520-amino-acid polypeptide reads, in one-letter code: Peptide chain release factor 3 (520 aa).

In terms of domain architecture, tr-type G spans 8–277 (ESRKTFAIIS…FAPMPNARQT (270 aa)). GTP-binding positions include 17–24 (SHPDAGKT), 85–89 (DTPGH), and 139–142 (NKLD).

Belongs to the TRAFAC class translation factor GTPase superfamily. Classic translation factor GTPase family. PrfC subfamily.

It localises to the cytoplasm. Its function is as follows. Increases the formation of ribosomal termination complexes and stimulates activities of RF-1 and RF-2. It binds guanine nucleotides and has strong preference for UGA stop codons. It may interact directly with the ribosome. The stimulation of RF-1 and RF-2 is significantly reduced by GTP and GDP, but not by GMP. The polypeptide is Peptide chain release factor 3 (Staphylococcus aureus (strain JH1)).